A 279-amino-acid polypeptide reads, in one-letter code: Diaminopimelate epimerase (279 aa).

Substrate contacts are provided by N13 and N66. C75 functions as the Proton donor in the catalytic mechanism. Substrate is bound by residues 76 to 77 (GN), N162, N195, and 213 to 214 (ER). Residue C222 is the Proton acceptor of the active site. 223–224 (GT) contributes to the substrate binding site.

The protein belongs to the diaminopimelate epimerase family. As to quaternary structure, homodimer.

It is found in the cytoplasm. The enzyme catalyses (2S,6S)-2,6-diaminopimelate = meso-2,6-diaminopimelate. The protein operates within amino-acid biosynthesis; L-lysine biosynthesis via DAP pathway; DL-2,6-diaminopimelate from LL-2,6-diaminopimelate: step 1/1. Catalyzes the stereoinversion of LL-2,6-diaminopimelate (L,L-DAP) to meso-diaminopimelate (meso-DAP), a precursor of L-lysine and an essential component of the bacterial peptidoglycan. This chain is Diaminopimelate epimerase, found in Synechocystis sp. (strain ATCC 27184 / PCC 6803 / Kazusa).